Here is a 622-residue protein sequence, read N- to C-terminus: MALRGLIRQSKVRRRREMLPQQVGFVCAVLALVCCASGLFGSLGHKTASAGKHVLLDTWRNRKLMAPINGTPLAKNCTDPAIHEFPTDLFSNKERQHGAVLLHILGALYMFYALAIVCDDFFVPSLEKICEKLHLSEDVAGATFMAAGSSTPELFASVIGVFITHGDVGVGTIVGSAVFNILCIIGVCGLFAGQVVRLTWWAVCRDSVYYTLSVIVLIAFIYDEEIVWWEGLVLIILYVFYILIMKYNMKMQTFFTTKQKSIANGNPVSNELEDGNDLYDGSYDDPSVPLLGQVKEKPPYGKTPVVMVDEILSSSPPKFTFPEAGLRIMITNKFGPRTRLRMASRIIINERQRLINSANGVNSKPLQNGRHENMENGNVPVENPEDPQQGQEQQPPPQPPPPEPESVETVFLSPFSMPEAKGDKAKWVFTWPLIFLLCVTIPNCSKPRWEKFFMVTFITATLWIAVFSYLMVWLVTIIGYTLGIPDVIMGITFLAAGTSVPDCMASLIVARQGLGDMAVSNTIGSNVFDILVGLGIPWGLQTMVINYGSTVKINSRGLVYSVVLLLGSVALTVLGIHLNKWRLDRKLGIYVLVLYAVFLCFSIMIEFNVFTFVNLPMCREDD.

The signal sequence occupies residues 1–38 (MALRGLIRQSKVRRRREMLPQQVGFVCAVLALVCCASG). The Extracellular portion of the chain corresponds to 39–97 (LFGSLGHKTASAGKHVLLDTWRNRKLMAPINGTPLAKNCTDPAIHEFPTDLFSNKERQH). Asparagine 76 carries N-linked (GlcNAc...) asparagine glycosylation. Residues 98–118 (GAVLLHILGALYMFYALAIVC) traverse the membrane as a helical segment. Residues 119–142 (DDFFVPSLEKICEKLHLSEDVAGA) lie on the Cytoplasmic side of the membrane. Residues 139 to 179 (VAGATFMAAGSSTPELFASVIGVFITHGDVGVGTIVGSAVF) form an Alpha-1 repeat. A helical transmembrane segment spans residues 143–163 (TFMAAGSSTPELFASVIGVFI). Residues 164-172 (THGDVGVGT) are Extracellular-facing. The chain crosses the membrane as a helical span at residues 173–193 (IVGSAVFNILCIIGVCGLFAG). Topologically, residues 194 to 200 (QVVRLTW) are cytoplasmic. Residues 201 to 221 (WAVCRDSVYYTLSVIVLIAFI) form a helical membrane-spanning segment. The Extracellular portion of the chain corresponds to 222–224 (YDE). Residues 225-245 (EIVWWEGLVLIILYVFYILIM) traverse the membrane as a helical segment. Residues 246 to 457 (KYNMKMQTFF…RWEKFFMVTF (212 aa)) are Cytoplasmic-facing. Residues 358–408 (ANGVNSKPLQNGRHENMENGNVPVENPEDPQQGQEQQPPPQPPPPEPESVE) are disordered. Positions 394 to 404 (QPPPQPPPPEP) are enriched in pro residues. Residues 458–478 (ITATLWIAVFSYLMVWLVTII) form a helical membrane-spanning segment. Glycine 479 is a topological domain (extracellular). A helical transmembrane segment spans residues 480–500 (YTLGIPDVIMGITFLAAGTSV). One copy of the Alpha-2 repeat lies at 495–526 (AAGTSVPDCMASLIVARQGLGDMAVSNTIGSN). Topologically, residues 501 to 526 (PDCMASLIVARQGLGDMAVSNTIGSN) are cytoplasmic. The helical transmembrane segment at 527-547 (VFDILVGLGIPWGLQTMVINY) threads the bilayer. Topologically, residues 548–557 (GSTVKINSRG) are extracellular. Residues 558 to 578 (LVYSVVLLLGSVALTVLGIHL) traverse the membrane as a helical segment. At 579–586 (NKWRLDRK) the chain is on the cytoplasmic side. Residues 587–607 (LGIYVLVLYAVFLCFSIMIEF) form a helical membrane-spanning segment. The Extracellular segment spans residues 608–622 (NVFTFVNLPMCREDD).

Belongs to the Ca(2+):cation antiporter (CaCA) (TC 2.A.19) family. SLC24A subfamily. As to expression, expressed in late secretory-stage and maturation-stage ameloblasts, with significantly increased expression during the late stages of amelogenesis (at protein level). Widely expressed in most regions of the brain, including hippocampus, neocortex, thalamus, striatum and olfactory bulb. Expressed in the olfactory sensory neurons.

It is found in the cell membrane. The protein localises to the cytoplasm. The enzyme catalyses Ca(2+)(out) + K(+)(out) + 4 Na(+)(in) = Ca(2+)(in) + K(+)(in) + 4 Na(+)(out). Calcium, potassium:sodium antiporter that transports 1 Ca(2+) and 1 K(+) in exchange for 4 Na(+). Controls the rapid response termination and proper regulation of adaptation in olfactory sensory neurons (OSNs) which subsequently influences how odor information is encoded and perceived. May play a role in calcium transport during amelogenesis. In Mus musculus (Mouse), this protein is Sodium/potassium/calcium exchanger 4.